The chain runs to 104 residues: L-rhamnose mutarotase (104 aa).

Position 18 (Tyr-18) interacts with substrate. The active-site Proton donor is the His-22. Residues Tyr-41 and 76–77 (WW) contribute to the substrate site.

Belongs to the rhamnose mutarotase family. In terms of assembly, homodimer.

It is found in the cytoplasm. The catalysed reaction is alpha-L-rhamnose = beta-L-rhamnose. The protein operates within carbohydrate metabolism; L-rhamnose metabolism. Functionally, involved in the anomeric conversion of L-rhamnose. This is L-rhamnose mutarotase from Rhizobium meliloti (strain 1021) (Ensifer meliloti).